Consider the following 68-residue polypeptide: ATP synthase F(0) complex subunit 8 (68 aa).

The helical transmembrane segment at 8 to 24 (VWPTIITSMLLTLFLLM) threads the bilayer. N6-acetyllysine; alternate is present on Lys-54. Lys-54 is modified (N6-succinyllysine; alternate). Lys-57 is subject to N6-acetyllysine.

Belongs to the ATPase protein 8 family. Component of the ATP synthase complex composed at least of ATP5F1A/subunit alpha, ATP5F1B/subunit beta, ATP5MC1/subunit c (homooctomer), MT-ATP6/subunit a, MT-ATP8/subunit 8, ATP5ME/subunit e, ATP5MF/subunit f, ATP5MG/subunit g, ATP5MK/subunit k, ATP5MJ/subunit j, ATP5F1C/subunit gamma, ATP5F1D/subunit delta, ATP5F1E/subunit epsilon, ATP5PF/subunit F6, ATP5PB/subunit b, ATP5PD/subunit d, ATP5PO/subunit OSCP. ATP synthase complex consists of a soluble F(1) head domain (subunits alpha(3) and beta(3)) - the catalytic core - and a membrane F(0) domain - the membrane proton channel (subunits c, a, 8, e, f, g, k and j). These two domains are linked by a central stalk (subunits gamma, delta, and epsilon) rotating inside the F1 region and a stationary peripheral stalk (subunits F6, b, d, and OSCP). Interacts with PRICKLE3.

It localises to the mitochondrion membrane. In terms of biological role, subunit 8, of the mitochondrial membrane ATP synthase complex (F(1)F(0) ATP synthase or Complex V) that produces ATP from ADP in the presence of a proton gradient across the membrane which is generated by electron transport complexes of the respiratory chain. ATP synthase complex consist of a soluble F(1) head domain - the catalytic core - and a membrane F(1) domain - the membrane proton channel. These two domains are linked by a central stalk rotating inside the F(1) region and a stationary peripheral stalk. During catalysis, ATP synthesis in the catalytic domain of F(1) is coupled via a rotary mechanism of the central stalk subunits to proton translocation. In vivo, can only synthesize ATP although its ATP hydrolase activity can be activated artificially in vitro. Part of the complex F(0) domain. This chain is ATP synthase F(0) complex subunit 8, found in Symphalangus syndactylus (Siamang).